Here is a 351-residue protein sequence, read N- to C-terminus: Outer membrane porin PhoE (351 aa).

An N-terminal signal peptide occupies residues 1–21 (MKKSTLALVVMGIVASASVQA).

The protein belongs to the Gram-negative porin family. As to quaternary structure, homotrimer. Forms mixed heterotrimers with OmpC and with OmpF; other mixed heterotrimers are also probable.

It is found in the cell outer membrane. In terms of biological role, uptake of inorganic phosphate, phosphorylated compounds, and some other negatively charged solutes. The chain is Outer membrane porin PhoE (phoE) from Escherichia coli (strain K12).